We begin with the raw amino-acid sequence, 273 residues long: Bis(5'-nucleosyl)-tetraphosphatase, symmetrical (273 aa).

Belongs to the Ap4A hydrolase family.

It catalyses the reaction P(1),P(4)-bis(5'-adenosyl) tetraphosphate + H2O = 2 ADP + 2 H(+). In terms of biological role, hydrolyzes diadenosine 5',5'''-P1,P4-tetraphosphate to yield ADP. In Aromatoleum aromaticum (strain DSM 19018 / LMG 30748 / EbN1) (Azoarcus sp. (strain EbN1)), this protein is Bis(5'-nucleosyl)-tetraphosphatase, symmetrical.